The primary structure comprises 282 residues: Secretory carrier-associated membrane protein 1 (282 aa).

Residues 1–49 (MSRYQSHSFDDGEINPFANPTSVPAATSKLSPLPPEPYDRGATMDIPLD) form a disordered region. Residues 1–117 (MSRYQSHSFD…EIPIHLQRIQ (117 aa)) lie on the Cytoplasmic side of the membrane. Positions 18 to 30 (ANPTSVPAATSKL) are enriched in polar residues. At Ser31 the chain carries Phosphoserine. The stretch at 48–93 (LDSGKDLKAKEKELREKEAELKRREQEIKRKEDAIAQAGIVIEEKN) forms a coiled coil. 4 consecutive transmembrane segments (helical) span residues 118-138 (YVAFTSMLGLVVCLLWNIVAV), 150-170 (IWFLAIIYFISGVPGAYVMWY), 185-205 (FGWFFFTYLFHIAFCVFAAVA), and 233-253 (IFYFIGFGFFCLESLVSIWVI). At 254–282 (QQVYMYFRGSGKAAEMKQEATRRAMMAAL) the chain is on the cytoplasmic side.

This sequence belongs to the SCAMP family.

The protein localises to the cell membrane. It is found in the cytoplasmic vesicle. Its subcellular location is the secretory vesicle membrane. Probably involved in membrane trafficking. This chain is Secretory carrier-associated membrane protein 1 (SCAMP1), found in Arabidopsis thaliana (Mouse-ear cress).